The sequence spans 712 residues: Polyribonucleotide nucleotidyltransferase (712 aa).

The Mg(2+) site is built by Asp-487 and Asp-493. Residues 554–613 (PKIITMTINPDKIRDVIGPSGKQINKIIEETGVKIDIEQDGTVFISSINQEMNDKAKKII) enclose the KH domain. The S1 motif domain maps to 623-691 (GEIYEGKVKR…KQGRVNLSRK (69 aa)).

Belongs to the polyribonucleotide nucleotidyltransferase family. Mg(2+) is required as a cofactor.

It localises to the cytoplasm. The enzyme catalyses RNA(n+1) + phosphate = RNA(n) + a ribonucleoside 5'-diphosphate. Involved in mRNA degradation. Catalyzes the phosphorolysis of single-stranded polyribonucleotides processively in the 3'- to 5'-direction. This is Polyribonucleotide nucleotidyltransferase from Bacillus cereus (strain ATCC 10987 / NRS 248).